The sequence spans 132 residues: Small ribosomal subunit protein uS8c (132 aa).

This sequence belongs to the universal ribosomal protein uS8 family. In terms of assembly, part of the 30S ribosomal subunit.

The protein resides in the plastid. The protein localises to the chloroplast. Its function is as follows. One of the primary rRNA binding proteins, it binds directly to 16S rRNA central domain where it helps coordinate assembly of the platform of the 30S subunit. This chain is Small ribosomal subunit protein uS8c (rps8), found in Dioscorea elephantipes (Elephant's foot yam).